The following is a 448-amino-acid chain: Trigger factor (448 aa).

Residues 172–257 enclose the PPIase FKBP-type domain; that stretch reads GDRVTVDFVG…MKKIEWPHLP (86 aa).

Belongs to the FKBP-type PPIase family. Tig subfamily.

The protein resides in the cytoplasm. It carries out the reaction [protein]-peptidylproline (omega=180) = [protein]-peptidylproline (omega=0). In terms of biological role, involved in protein export. Acts as a chaperone by maintaining the newly synthesized protein in an open conformation. Functions as a peptidyl-prolyl cis-trans isomerase. This chain is Trigger factor, found in Burkholderia orbicola (strain MC0-3).